We begin with the raw amino-acid sequence, 878 residues long: Indoleacetate decarboxylase (878 aa).

Positions 42–750 (DRTKRMKERF…VTGATPDGRL (709 aa)) constitute a PFL domain. Cys500 serves as the catalytic Cysteine radical intermediate. The active-site Proton acceptor is Glu502. The Glycine radical domain occupies 758–878 (GILSASPGTD…VIARTEYDAL (121 aa)). At Gly853 the chain carries Glycine radical.

The protein belongs to the glycyl radical enzyme (GRE) family. As to quaternary structure, homodimer (predominantly) and monomer. In terms of processing, requires the activating protein OsIADAE to generate the key active site glycyl radical on Gly-853 that is involved in catalysis.

It catalyses the reaction (indol-3-yl)acetate + H(+) = skatole + CO2. Its pathway is amino-acid degradation. Glycyl radical enzyme that catalyzes the terminal step of tryptophan fermentation, the decarboxylation of indoleacetate to form skatole, a malodorous compound that contributes to the characteristic smell of animal feces. No activity is detected with phenylacetate or p-hydroxyphenylacetate as substrates, indicating high substrate specificity. This is Indoleacetate decarboxylase from Tractidigestivibacter scatoligenes (Olsenella scatoligenes).